A 538-amino-acid chain; its full sequence is Syncytin-1 (538 aa).

The N-terminal stretch at M1 to T20 is a signal peptide. At A21 to Q443 the chain is on the extracellular side. The N-linked (GlcNAc...) asparagine glycan is linked to N169. A CXXC motif is present at residues C186 to C189. 3 cysteine pairs are disulfide-bonded: C186–C189, C186–C405, and C397–C404. N-linked (GlcNAc...) asparagine glycosylation is found at N208, N214, N234, and N281. Residues I320 to I340 form a fusion peptide region. The immunosuppression stretch occupies residues L380–T396. Positions C397–C405 match the CX6CC motif. Residue N409 is glycosylated (N-linked (GlcNAc...) asparagine). A helical transmembrane segment spans residues W444–F464. An essential for the fusiogenic function region spans residues G465–K484. The Cytoplasmic portion of the chain corresponds to G465–S538. A disordered region spans residues K496–S538.

The protein belongs to the gamma type-C retroviral envelope protein family. HERV class-I W env subfamily. As to quaternary structure, the mature envelope protein (Env) consists of a trimer of SU-TM heterodimers attached probably by a labile interchain disulfide bond. Interacts with the C-type lectin CD209/DC-SIGN. In terms of processing, specific enzymatic cleavages in vivo yield mature proteins. Envelope glycoproteins are synthesized as an inactive precursor that is heavily N-glycosylated and processed likely by furin in the Golgi to yield the mature SU and TM proteins. The cleavage site between SU and TM requires the minimal sequence [KR]-X-[KR]-R. Post-translationally, the CXXC motif is highly conserved across a broad range of retroviral envelope proteins. It is thought to participate in the formation of a labile disulfide bond possibly with the CX6CC motif present in the transmembrane protein.

Its subcellular location is the cell membrane. It localises to the virion. In terms of biological role, this endogenous retroviral envelope protein has retained its original fusogenic properties and participates in trophoblast fusion and the formation of a syncytium during placenta morphogenesis. May recognize and induce fusion through binding of SLC1A4 and SLC1A5. Endogenous envelope proteins may have kept, lost or modified their original function during evolution. Retroviral envelope proteins mediate receptor recognition and membrane fusion during early infection. The surface protein (SU) mediates receptor recognition, while the transmembrane protein (TM) acts as a class I viral fusion protein. The protein may have at least 3 conformational states: pre-fusion native state, pre-hairpin intermediate state, and post-fusion hairpin state. During viral and target cell membrane fusion, the coiled coil regions (heptad repeats) assume a trimer-of-hairpins structure, positioning the fusion peptide in close proximity to the C-terminal region of the ectodomain. The formation of this structure appears to drive apposition and subsequent fusion of membranes. This chain is Syncytin-1 (ERVW-1), found in Gorilla gorilla gorilla (Western lowland gorilla).